Consider the following 365-residue polypeptide: Caffeic acid 3-O-methyltransferase (365 aa).

130-136 (MNQDKVL) serves as a coordination point for substrate. Residues 162–180 (AFDYHGTDPRFNKVFNKGM) are substrate binding. Gly208, Asp231, Asp251, Met252, and Lys265 together coordinate S-adenosyl-L-methionine. Residue His269 is the Proton acceptor of the active site.

This sequence belongs to the class I-like SAM-binding methyltransferase superfamily. Cation-independent O-methyltransferase family. COMT subfamily. Homodimer.

It carries out the reaction (E)-caffeate + S-adenosyl-L-methionine = (E)-ferulate + S-adenosyl-L-homocysteine + H(+). It functions in the pathway aromatic compound metabolism; phenylpropanoid biosynthesis. Its function is as follows. Catalyzes the conversion of caffeic acid to ferulic acid and of 5-hydroxyferulic acid to sinapic acid. The resulting products may subsequently be converted to the corresponding alcohols that are incorporated into lignins. This chain is Caffeic acid 3-O-methyltransferase (COMT1), found in Rosa chinensis (China rose).